A 271-amino-acid polypeptide reads, in one-letter code: Phosphatidate cytidylyltransferase (271 aa).

8 helical membrane passes run 12–32, 53–73, 75–95, 111–131, 136–156, 174–194, 199–219, and 251–271; these read LLPI…ALFI, FGRV…YHLP, LAGA…VLVL, LGMG…LKQW, GLII…YFSG, WEGV…VGLY, LGAL…SIVG, and SLTA…WGAP.

It belongs to the CDS family.

Its subcellular location is the cell inner membrane. The catalysed reaction is a 1,2-diacyl-sn-glycero-3-phosphate + CTP + H(+) = a CDP-1,2-diacyl-sn-glycerol + diphosphate. Its pathway is phospholipid metabolism; CDP-diacylglycerol biosynthesis; CDP-diacylglycerol from sn-glycerol 3-phosphate: step 3/3. In Pseudomonas aeruginosa (strain ATCC 15692 / DSM 22644 / CIP 104116 / JCM 14847 / LMG 12228 / 1C / PRS 101 / PAO1), this protein is Phosphatidate cytidylyltransferase (cdsA).